The following is a 292-amino-acid chain: ATP synthase gamma chain (292 aa).

This sequence belongs to the ATPase gamma chain family. As to quaternary structure, F-type ATPases have 2 components, CF(1) - the catalytic core - and CF(0) - the membrane proton channel. CF(1) has five subunits: alpha(3), beta(3), gamma(1), delta(1), epsilon(1). CF(0) has three main subunits: a, b and c.

The protein resides in the cell membrane. Functionally, produces ATP from ADP in the presence of a proton gradient across the membrane. The gamma chain is believed to be important in regulating ATPase activity and the flow of protons through the CF(0) complex. The sequence is that of ATP synthase gamma chain from Streptococcus mutans serotype c (strain ATCC 700610 / UA159).